The chain runs to 256 residues: tRNA-cytidine(32) 2-sulfurtransferase (256 aa).

The PP-loop motif motif lies at 35–40; the sequence is SGGKDS. Cysteine 110, cysteine 113, and cysteine 201 together coordinate [4Fe-4S] cluster.

The protein belongs to the TtcA family. As to quaternary structure, homodimer. Mg(2+) is required as a cofactor. [4Fe-4S] cluster serves as cofactor.

It localises to the cytoplasm. It catalyses the reaction cytidine(32) in tRNA + S-sulfanyl-L-cysteinyl-[cysteine desulfurase] + AH2 + ATP = 2-thiocytidine(32) in tRNA + L-cysteinyl-[cysteine desulfurase] + A + AMP + diphosphate + H(+). It functions in the pathway tRNA modification. Functionally, catalyzes the ATP-dependent 2-thiolation of cytidine in position 32 of tRNA, to form 2-thiocytidine (s(2)C32). The sulfur atoms are provided by the cysteine/cysteine desulfurase (IscS) system. The sequence is that of tRNA-cytidine(32) 2-sulfurtransferase from Coxiella burnetii (strain CbuG_Q212) (Coxiella burnetii (strain Q212)).